The following is a 437-amino-acid chain: MANDYVSTVLLLLSLLIFLSQRTDSASIVKSLPGFDGPLPFELETGYIGVGEEEEVQLFYYFIKSERNPQEDPLLLWLSGGPGCSSISGLLYENGPVNVKIEVYNGTLPSLVSTTYSWTKVSSIIYLDQPVGTGFSYSRTKLVNKPSDSGEAKRIHEFLHKWLGKHQEFSSNPFYVGGDSYCGMVIPALVQEISKGNYVCCKPPINLQGYILGNPSTENEVDINYRIPYAHGMALISDELYESMKRICKGKYENVDPRNTKCLKLVGEYQKCTKRINKALIITPECVDTSPDCYMYRYLLTTYWANDENVQRALHVNKGSIGEWVRCYFEIPYNHDIKSSVPYHMNNSIDGYASLIFSGDHDMEVPYLGTQAWIRSLNYSLIDDWRPWMIGDQIAGYTRTYANKMAFATIKGGGHTPEYKPEESYIMFQRWISGQPL.

The first 25 residues, 1–25, serve as a signal peptide directing secretion; that stretch reads MANDYVSTVLLLLSLLIFLSQRTDS. 3 disulfide bridges follow: C84–C327, C248–C262, and C286–C293. N105 carries an N-linked (GlcNAc...) asparagine glycan. Residue S180 is part of the active site. N-linked (GlcNAc...) asparagine glycosylation occurs at N346. Residue D362 is part of the active site. N378 carries N-linked (GlcNAc...) asparagine glycosylation. H415 is an active-site residue.

It belongs to the peptidase S10 family. In terms of tissue distribution, ubiquitous.

It is found in the secreted. Its function is as follows. Probable carboxypeptidase. This chain is Serine carboxypeptidase-like 7 (SCPL7), found in Arabidopsis thaliana (Mouse-ear cress).